Here is a 394-residue protein sequence, read N- to C-terminus: Elongation factor Tu (394 aa).

The region spanning 10–204 (KPHINIGTIG…AVDDNIPTPE (195 aa)) is the tr-type G domain. A G1 region spans residues 19 to 26 (GHVDHGKT). 19–26 (GHVDHGKT) lines the GTP pocket. Threonine 26 serves as a coordination point for Mg(2+). Positions 60 to 64 (GITIN) are G2. A G3 region spans residues 81–84 (DCPG). GTP is bound by residues 81-85 (DCPGH) and 136-139 (NKVD). The G4 stretch occupies residues 136–139 (NKVD). A G5 region spans residues 174-176 (SAL).

This sequence belongs to the TRAFAC class translation factor GTPase superfamily. Classic translation factor GTPase family. EF-Tu/EF-1A subfamily. Monomer.

The protein resides in the cytoplasm. It carries out the reaction GTP + H2O = GDP + phosphate + H(+). Functionally, GTP hydrolase that promotes the GTP-dependent binding of aminoacyl-tRNA to the A-site of ribosomes during protein biosynthesis. The protein is Elongation factor Tu of Chlamydia pneumoniae (Chlamydophila pneumoniae).